The primary structure comprises 585 residues: Polyadenylate-binding protein, cytoplasmic and nuclear (585 aa).

The segment at 14–37 (QLKIEEQTAPTTTESETPKVETSG) is disordered. RRM domains lie at 38-116 (ASLY…WSQR), 126-203 (GNIY…LHVS), 219-296 (TNVY…RAQK), and 322-399 (VNLF…IAQR). Positions 488-567 (GQFPRNGQQQ…AHAAYQKFKE (80 aa)) constitute a PABC domain.

This sequence belongs to the polyadenylate-binding protein type-1 family.

It is found in the cytoplasm. The protein localises to the nucleus. Its function is as follows. Binds the poly(A) tail of mRNA. Appears to be an important mediator of the multiple roles of the poly(A) tail in mRNA biogenesis, stability and translation. In the nucleus, involved in both mRNA cleavage and polyadenylation. Is also required for efficient mRNA export to the cytoplasm. Acts in concert with a poly(A)-specific nuclease (PAN) to affect poly(A) tail shortening, which may occur concomitantly with either nucleocytoplasmic mRNA transport or translational initiation. In the cytoplasm, stimulates translation initiation and regulates mRNA decay through translation termination-coupled poly(A) shortening, probably mediated by PAN. This Eremothecium gossypii (strain ATCC 10895 / CBS 109.51 / FGSC 9923 / NRRL Y-1056) (Yeast) protein is Polyadenylate-binding protein, cytoplasmic and nuclear (PAB1).